Here is a 412-residue protein sequence, read N- to C-terminus: Alpha-2,8-sialyltransferase 8E (412 aa).

At 1–16 (MRYADPSANRDLLGNR) the chain is on the cytoplasmic side. Residues 17–37 (TLLFIFICAFALVTLLQQILY) traverse the membrane as a helical; Signal-anchor for type II membrane protein segment. The Lumenal segment spans residues 38–412 (SKSYIKRGFQ…RVHTGTCNCC (375 aa)). N-linked (GlcNAc...) asparagine glycosylation is found at N58, N64, N73, and N92. Disulfide bonds link C200–C349 and C214–C409. Substrate is bound by residues N228 and 250–252 (NPS). N-linked (GlcNAc...) asparagine glycosylation occurs at N277. 336–338 (STG) serves as a coordination point for substrate. H384 acts as the Proton donor/acceptor in catalysis.

It belongs to the glycosyltransferase 29 family. In terms of tissue distribution, highly expressed in brain. Expressed at low levels in other tissues, including liver, testis, lung, placenta and spleen.

It is found in the golgi apparatus membrane. The catalysed reaction is a ganglioside GT1b (d18:1(4E)) + CMP-N-acetyl-beta-neuraminate = a ganglioside GQ1b (d18:1(4E)) + CMP + H(+). It carries out the reaction a ganglioside GD3 (d18:1(4E)) + CMP-N-acetyl-beta-neuraminate = a ganglioside GT3 (d18:1(4E)) + CMP + H(+). It catalyses the reaction a ganglioside GD1a (d18:1(4E)) + CMP-N-acetyl-beta-neuraminate = a ganglioside GT1a (d18:1(4E)) + CMP + H(+). The enzyme catalyses a ganglioside GM1b (d18:1(4E)) + CMP-N-acetyl-beta-neuraminate = a ganglioside GD1c (d18:1(4E)) + CMP + H(+). The catalysed reaction is a ganglioside GQ1c (d18:1(4E)) + CMP-N-acetyl-beta-neuraminate = a ganglioside GP1c (d18:1(4E)) + CMP + H(+). Its pathway is protein modification; protein glycosylation. In terms of biological role, involved in the synthesis of gangliosides GD1c, GT1a, GQ1b, GP1c and GT3 from GD1a, GT1b, GM1b and GD3 respectively. The polypeptide is Alpha-2,8-sialyltransferase 8E (Mus musculus (Mouse)).